Reading from the N-terminus, the 445-residue chain is tRNA-2-methylthio-N(6)-dimethylallyladenosine synthase (445 aa).

The MTTase N-terminal domain maps to 3-124 (KKLYIKTYGC…LPELISKVVR (122 aa)). The [4Fe-4S] cluster site is built by cysteine 12, cysteine 48, cysteine 87, cysteine 162, cysteine 166, and cysteine 169. The region spanning 148-380 (YPQGTSAFIS…QQELMAQQLA (233 aa)) is the Radical SAM core domain. Positions 383 to 445 (TSCVGSTMKV…SLNSLTGEIL (63 aa)) constitute a TRAM domain.

The protein belongs to the methylthiotransferase family. MiaB subfamily. Monomer. [4Fe-4S] cluster is required as a cofactor.

The protein localises to the cytoplasm. It catalyses the reaction N(6)-dimethylallyladenosine(37) in tRNA + (sulfur carrier)-SH + AH2 + 2 S-adenosyl-L-methionine = 2-methylsulfanyl-N(6)-dimethylallyladenosine(37) in tRNA + (sulfur carrier)-H + 5'-deoxyadenosine + L-methionine + A + S-adenosyl-L-homocysteine + 2 H(+). In terms of biological role, catalyzes the methylthiolation of N6-(dimethylallyl)adenosine (i(6)A), leading to the formation of 2-methylthio-N6-(dimethylallyl)adenosine (ms(2)i(6)A) at position 37 in tRNAs that read codons beginning with uridine. The polypeptide is tRNA-2-methylthio-N(6)-dimethylallyladenosine synthase (Rickettsia conorii (strain ATCC VR-613 / Malish 7)).